A 695-amino-acid chain; its full sequence is Putative ATP-dependent DNA helicase R568 (695 aa).

The UvrD-like helicase ATP-binding domain occupies 86–499 (KFSEEQIKYI…FRNEEIFDSN (414 aa)). 107–114 (ACAGSGKT) lines the ATP pocket.

It belongs to the helicase family. UvrD subfamily.

It catalyses the reaction Couples ATP hydrolysis with the unwinding of duplex DNA by translocating in the 3'-5' direction.. It carries out the reaction ATP + H2O = ADP + phosphate + H(+). Its function is as follows. ATP-dependent DNA helicase. The sequence is that of Putative ATP-dependent DNA helicase R568 from Acanthamoeba polyphaga mimivirus (APMV).